Here is a 469-residue protein sequence, read N- to C-terminus: Citrate synthase, mitochondrial (469 aa).

The N-terminal 30 residues, 1–30 (MSFLTVSRLAPKLLNSKNATYFLVAARNAS), are a transit peptide targeting the mitochondrion. Active-site residues include His304 and His350. Arg359 contacts oxaloacetate. Residue Asp405 is part of the active site. Residues Arg431 and Arg451 each coordinate oxaloacetate.

The protein belongs to the citrate synthase family. In terms of assembly, homodimer.

Its subcellular location is the mitochondrion matrix. The catalysed reaction is oxaloacetate + acetyl-CoA + H2O = citrate + CoA + H(+). It participates in carbohydrate metabolism; tricarboxylic acid cycle; isocitrate from oxaloacetate: step 1/2. Its function is as follows. Key enzyme of the Krebs tricarboxylic acid cycle which catalyzes the synthesis of citrate from acetyl coenzyme A and oxaloacetate. The chain is Citrate synthase, mitochondrial (cs) from Xiphias gladius (Swordfish).